The following is a 224-amino-acid chain: Type II restriction enzyme BstVI (224 aa).

The protein belongs to the XhoI type II restriction endonuclease family.

It catalyses the reaction Endonucleolytic cleavage of DNA to give specific double-stranded fragments with terminal 5'-phosphates.. In terms of biological role, a P subtype restriction enzyme that recognizes the double-stranded sequence 5'-CTCGAG-3' and cleaves after C-1. In Geobacillus stearothermophilus (Bacillus stearothermophilus), this protein is Type II restriction enzyme BstVI.